The primary structure comprises 150 residues: Endoribonuclease YbeY (150 aa).

His-102, His-106, and His-112 together coordinate Zn(2+).

It belongs to the endoribonuclease YbeY family. The cofactor is Zn(2+).

Its subcellular location is the cytoplasm. Functionally, single strand-specific metallo-endoribonuclease involved in late-stage 70S ribosome quality control and in maturation of the 3' terminus of the 16S rRNA. The polypeptide is Endoribonuclease YbeY (Thermotoga sp. (strain RQ2)).